The chain runs to 263 residues: Dihydropteroate synthase type-3 (263 aa).

In terms of domain architecture, Pterin-binding spans 2-257; sequence SKIFGIVNIT…DVKSLSDALK (256 aa). Asparagine 9 contributes to the Mg(2+) binding site. Serine 49 is a 4-aminobenzoate binding site. 3 residues coordinate (7,8-dihydropterin-6-yl)methyl diphosphate: aspartate 82, asparagine 101, and aspartate 172. 6-hydroxymethyl-7,8-dihydropterin contacts are provided by asparagine 101 and aspartate 172. Phenylalanine 177 is a 4-aminobenzoate binding site. Lysine 211 lines the (7,8-dihydropterin-6-yl)methyl diphosphate pocket. Lysine 211 contacts 6-hydroxymethyl-7,8-dihydropterin. Serine 212 contacts 4-aminobenzoate. 245–247 serves as a coordination point for (7,8-dihydropterin-6-yl)methyl diphosphate; that stretch reads RTH.

It belongs to the DHPS family. Mg(2+) serves as cofactor.

It catalyses the reaction (7,8-dihydropterin-6-yl)methyl diphosphate + 4-aminobenzoate = 7,8-dihydropteroate + diphosphate. Its pathway is cofactor biosynthesis; tetrahydrofolate biosynthesis; 7,8-dihydrofolate from 2-amino-4-hydroxy-6-hydroxymethyl-7,8-dihydropteridine diphosphate and 4-aminobenzoate: step 1/2. Functionally, catalyzes the condensation of para-aminobenzoate (pABA) with 6-hydroxymethyl-7,8-dihydropterin diphosphate (DHPt-PP) to form 7,8-dihydropteroate (H2Pte), the immediate precursor of folate derivatives. Confers resistance to sulfonamide antibiotics, including sulfamethoxazole (SMX), sulfadiazine and sulfisoxazole. This chain is Dihydropteroate synthase type-3, found in Escherichia coli.